The sequence spans 195 residues: Phosphoheptose isomerase (195 aa).

One can recognise an SIS domain in the interval 35–195 (LCVALYRGDK…EKEIFGDGVN (161 aa)). Substrate is bound at residue 51 to 53 (NGG). His60 and Glu64 together coordinate Zn(2+). Substrate-binding positions include Glu64, 93 to 94 (ND), 119 to 121 (STS), Ser124, and Gln171. 2 residues coordinate Zn(2+): Gln171 and His179.

Belongs to the SIS family. GmhA subfamily. In terms of assembly, homotetramer. Zn(2+) is required as a cofactor.

The protein localises to the cytoplasm. It catalyses the reaction 2 D-sedoheptulose 7-phosphate = D-glycero-alpha-D-manno-heptose 7-phosphate + D-glycero-beta-D-manno-heptose 7-phosphate. It participates in carbohydrate biosynthesis; D-glycero-D-manno-heptose 7-phosphate biosynthesis; D-glycero-alpha-D-manno-heptose 7-phosphate and D-glycero-beta-D-manno-heptose 7-phosphate from sedoheptulose 7-phosphate: step 1/1. Its function is as follows. Catalyzes the isomerization of sedoheptulose 7-phosphate in D-glycero-D-manno-heptose 7-phosphate. The chain is Phosphoheptose isomerase from Sulfurimonas denitrificans (strain ATCC 33889 / DSM 1251) (Thiomicrospira denitrificans (strain ATCC 33889 / DSM 1251)).